Consider the following 108-residue polypeptide: FK506-binding protein 1 (108 aa).

One can recognise a PPIase FKBP-type domain in the interval Gly-20–Asn-108.

It belongs to the FKBP-type PPIase family. FKBP1 subfamily.

The protein resides in the cytoplasm. It catalyses the reaction [protein]-peptidylproline (omega=180) = [protein]-peptidylproline (omega=0). Inhibited by both FK506 and rapamycin. In terms of biological role, PPIases accelerate the folding of proteins. It catalyzes the cis-trans isomerization of proline imidic peptide bonds in oligopeptides. This chain is FK506-binding protein 1 (FPR1), found in Cryptococcus neoformans var. neoformans serotype D (strain JEC21 / ATCC MYA-565) (Filobasidiella neoformans).